The chain runs to 223 residues: Urease accessory protein UreF (223 aa).

Belongs to the UreF family. In terms of assembly, ureD, UreF and UreG form a complex that acts as a GTP-hydrolysis-dependent molecular chaperone, activating the urease apoprotein by helping to assemble the nickel containing metallocenter of UreC. The UreE protein probably delivers the nickel.

The protein localises to the cytoplasm. Its function is as follows. Required for maturation of urease via the functional incorporation of the urease nickel metallocenter. The sequence is that of Urease accessory protein UreF from Rhizobium leguminosarum bv. trifolii (strain WSM2304).